The sequence spans 692 residues: MSREYDLKDYRNIGIMAHIDAGKTTTTERILFHTGKIHKIGETHDGGSQMDFMAQEKERGITITSAATTAFWRGKRINIIDTPGHVDFTVEVERSLRVLDGAVAVLDAQSGVEPQTETVWRQATNYKVPRIVFVNKMDKAGANLEESIKSVKTRLNGNAVAIQLNMGSESDYRGHIDLVEMKAWEFDGKPEENGKEIEIPAEYLEAAQIERSKLIEAVSSFDDEVMMLALEEQEIPVDLLKSAIRKATLTSEFFPVVCGTAFKNKGVKAMIDAVVDYLPSPLDVPAIKGYFQEKEVLVTASDENDFSALAFKIMNDPFVGSLTFFRVYSGILSKGSYVYNTTKDKKERIGRILQMHANSREEIDEVRTGDIAAAVGLKDTTTGDTIVGDKSKHIILEKMVFPEPVISQALEPESKAATEKLSLGLQKLAAEDPTFRTFTDTETGQTIIAGMGELHLDIIVDRLRREFGVQVKVGAPQVSYRETITAKADVEGKYIKQSGGKGQYGHVWITFEPNPNNGFEFVDKIVGGKIPKEYIKTIQKGLEEKMASGILAGYPMIDLKATLFDGSYHEVDSSEMAYKIAASMALTKAKDVVKTVLLEPIMDVSVVFPKEYYGDVVGDLSRRRGQIINDETRSDGASVIKSHVPLSEMFGYATDLRSMTKGRGTYQMHFDHYERTPRNIADEIIKKRNIKN.

A tr-type G domain is found at 8 to 282 (KDYRNIGIMA…AVVDYLPSPL (275 aa)). GTP is bound by residues 17 to 24 (AHIDAGKT), 81 to 85 (DTPGH), and 135 to 138 (NKMD).

This sequence belongs to the TRAFAC class translation factor GTPase superfamily. Classic translation factor GTPase family. EF-G/EF-2 subfamily.

It localises to the cytoplasm. Functionally, catalyzes the GTP-dependent ribosomal translocation step during translation elongation. During this step, the ribosome changes from the pre-translocational (PRE) to the post-translocational (POST) state as the newly formed A-site-bound peptidyl-tRNA and P-site-bound deacylated tRNA move to the P and E sites, respectively. Catalyzes the coordinated movement of the two tRNA molecules, the mRNA and conformational changes in the ribosome. The polypeptide is Elongation factor G (fusA) (Mycoplasmopsis pulmonis (strain UAB CTIP) (Mycoplasma pulmonis)).